Here is a 234-residue protein sequence, read N- to C-terminus: Thymidylate kinase (234 aa).

ATP is bound at residue 10–17 (GGEGSGKT).

Belongs to the thymidylate kinase family.

It catalyses the reaction dTMP + ATP = dTDP + ADP. In terms of biological role, phosphorylation of dTMP to form dTDP in both de novo and salvage pathways of dTTP synthesis. The chain is Thymidylate kinase from Cyanothece sp. (strain PCC 7425 / ATCC 29141).